A 520-amino-acid chain; its full sequence is Laccase-4 (520 aa).

Positions methionine 1–glycine 18 are cleaved as a signal peptide. 3 consecutive Plastocyanin-like domains span residues isoleucine 24–tyrosine 149, valine 161–tyrosine 303, and threonine 370–aspartate 491. Residues asparagine 73 and asparagine 76 are each glycosylated (N-linked (GlcNAc...) asparagine). Cu cation contacts are provided by histidine 86, histidine 88, histidine 131, and histidine 133. Intrachain disulfides connect cysteine 107–cysteine 509 and cysteine 139–cysteine 227. 2 N-linked (GlcNAc...) asparagine glycosylation sites follow: asparagine 239 and asparagine 399. The Cu cation site is built by histidine 418, histidine 421, histidine 423, histidine 473, cysteine 474, histidine 475, and histidine 479. A glycan (N-linked (GlcNAc...) asparagine) is linked at asparagine 497.

The protein belongs to the multicopper oxidase family. As to quaternary structure, homodimer. Cu cation serves as cofactor.

The protein localises to the secreted. It catalyses the reaction 4 hydroquinone + O2 = 4 benzosemiquinone + 2 H2O. Its function is as follows. Lignin degradation and detoxification of lignin-derived products. The sequence is that of Laccase-4 (LCC4) from Trametes villosa (White-rot fungus).